The following is a 688-amino-acid chain: Potassium-transporting ATPase ATP-binding subunit (688 aa).

4 consecutive transmembrane segments (helical) span residues 35-55, 62-82, 219-239, and 260-280; these read VMFV…AMLA, ALFT…ANFA, IALT…CVTL, and VLIA…LSAI. The active-site 4-aspartylphosphate intermediate is aspartate 313. ATP contacts are provided by residues aspartate 350, glutamate 354, 383–390, and lysine 401; that span reads FSAMTRMS. Positions 524 and 528 each coordinate Mg(2+). Helical transmembrane passes span 594–614, 622–642, and 667–687; these read FAII…LNIM, AVLS…PLAL, and GLIA…LLIL.

Belongs to the cation transport ATPase (P-type) (TC 3.A.3) family. Type IA subfamily. In terms of assembly, the system is composed of three essential subunits: KdpA, KdpB and KdpC.

The protein localises to the cell inner membrane. The enzyme catalyses K(+)(out) + ATP + H2O = K(+)(in) + ADP + phosphate + H(+). Its function is as follows. Part of the high-affinity ATP-driven potassium transport (or Kdp) system, which catalyzes the hydrolysis of ATP coupled with the electrogenic transport of potassium into the cytoplasm. This subunit is responsible for energy coupling to the transport system and for the release of the potassium ions to the cytoplasm. The protein is Potassium-transporting ATPase ATP-binding subunit of Photorhabdus laumondii subsp. laumondii (strain DSM 15139 / CIP 105565 / TT01) (Photorhabdus luminescens subsp. laumondii).